The primary structure comprises 413 residues: Multidrug resistance protein MdtA (413 aa).

The N-terminal stretch at 1–20 is a signal peptide; the sequence is MKGSNTFRWAIAIGVVVAAA. Disordered regions lie at residues 31–57 and 391–413; these read SPTA…RDGP and EPQT…GARA. Residues 32 to 49 are compositionally biased toward low complexity; it reads PTAAPGVAAQAQHTAAAG. Over residues 397–413 the composition is skewed to basic and acidic residues; sequence ADEKSPSRHEGQKGARA.

The protein belongs to the membrane fusion protein (MFP) (TC 8.A.1) family. Part of a tripartite efflux system composed of MdtA, MdtB and MdtC.

Its subcellular location is the cell inner membrane. This Salmonella typhi protein is Multidrug resistance protein MdtA.